The sequence spans 368 residues: Saccharopine dehydrogenase [NAD(+), L-lysine-forming] (368 aa).

Arg18 and Lys77 together coordinate L-saccharopine. The Proton acceptor role is filled by Lys77. At Ser85 the chain carries Phosphoserine. His96 functions as the Proton donor in the catalytic mechanism. An L-saccharopine-binding site is contributed by Gln101. An NAD(+)-binding site is contributed by Arg130. Arg131 and Phe135 together coordinate L-saccharopine. Residues 203-204 (GR), Asp227, Thr231, Tyr251, and Val278 contribute to the NAD(+) site. Cys205 and Cys249 are disulfide-bonded. 279 to 281 (SCD) provides a ligand contact to L-saccharopine. Residue 319 to 322 (IDHL) participates in NAD(+) binding.

It belongs to the AlaDH/PNT family. As to quaternary structure, monomer.

The enzyme catalyses L-saccharopine + NAD(+) + H2O = L-lysine + 2-oxoglutarate + NADH + H(+). The protein operates within amino-acid biosynthesis; L-lysine biosynthesis via AAA pathway; L-lysine from L-alpha-aminoadipate (fungal route): step 3/3. Functionally, catalyzes the NAD(+)-dependent cleavage of saccharopine to L-lysine and 2-oxoglutarate, the final step in the alpha-aminoadipate (AAA) pathway for lysin biosynthesis. This is Saccharopine dehydrogenase [NAD(+), L-lysine-forming] from Schizosaccharomyces pombe (strain 972 / ATCC 24843) (Fission yeast).